The primary structure comprises 321 residues: Queuosine 5'-phosphate N-glycosylase/hydrolase (321 aa).

Phenylalanine 227, aspartate 229, and aspartate 296 together coordinate queuine. Aspartate 229 functions as the Nucleophile or transition state stabilizer in the catalytic mechanism.

This sequence belongs to the QNG1 protein family.

The catalysed reaction is queuosine 5'-phosphate + H2O = queuine + D-ribose 5-phosphate. Its function is as follows. Catalyzes the hydrolysis of queuosine 5'-phosphate, releasing the nucleobase queuine (q). Is required for salvage of queuine from exogenous queuosine (Q) that is imported and then converted to queuosine 5'-phosphate intracellularly. The protein is Queuosine 5'-phosphate N-glycosylase/hydrolase of Dictyostelium discoideum (Social amoeba).